Consider the following 528-residue polypeptide: MQNAQIKSSSKGSGIDGTDRNSKDGVEKRPLEDVKQMIDAGTPDVGHKSTVETKPNVGWQASHSNLAALHEKEQKYEMEHHHARHKLHRQVIPDYTSASTAMFSDCMFNAAPDKVRSLSTMKSSGLSPKHPFNVVATFKGPFPQHSVESKPLDGGYSAKDHFPSFKMLQAQQHPAHRHYKDNDKYGLKSPSRSFVKDKKRLVHRFLKSMEPSSSGQSKDSSALAPAFDPILPNVISKPSKRPTHHSHSSDGSSSTQTDISLQSLLYHDLESSPKKHVSPSRPPSVASESSPAVANPIGLSPKDACNASFSQSSSSSLSSSSSSSSSTSFSQSVAVDPLEPPGNITYSSSNLSLNSDELDYYQRHIGLQLQQTEALLKHSLKDEVLKDENDLVKNIANFDKIVKELRDLRSRTIGWKELVEEDYLMNLKQDFDKENPESFEARLSDTINTNVAKLQDLEKRMASCKDRLASRKEVMRKMESLLSLENSLMISKKNVTFASKYRNEALDIVFLIIIIVICYTFKHLVSHK.

Low complexity predominate over residues 1 to 13 (MQNAQIKSSSKGS). Disordered stretches follow at residues 1–52 (MQNA…STVE), 170–193 (AQQH…PSRS), 230–257 (ILPN…STQT), and 270–334 (ESSP…QSVA). Over residues 17–36 (GTDRNSKDGVEKRPLEDVKQ) the composition is skewed to basic and acidic residues. 2 stretches are compositionally biased toward low complexity: residues 283-296 (PSVA…VANP) and 308-332 (SFSQ…FSQS). A helical transmembrane segment spans residues 505–521 (ALDIVFLIIIIVICYTF).

As to quaternary structure, interacts with HPH1/FRT1. Post-translationally, phosphorylated by CDC28.

Its subcellular location is the endoplasmic reticulum membrane. Its function is as follows. Required for growth under high NaCl, alkaline pH and cell wall stress. This Saccharomyces cerevisiae (strain ATCC 204508 / S288c) (Baker's yeast) protein is Protein HPH2 (FRT2).